We begin with the raw amino-acid sequence, 427 residues long: Mucorpepsin (427 aa).

The first 22 residues, 1–22, serve as a signal peptide directing secretion; that stretch reads MLFSKISSAILLTAASFALTSA. The propeptide at 23–66 is activation peptide; the sequence is RPVSKQSDADDKLLALPLTSVNRKYSQTKHGQQAAEKLGGIKAF. The Peptidase A1 domain maps to 86–418; that stretch reads YAIPVSIGTP…DFGKNRIGFA (333 aa). Asp-104 is an active-site residue. Cys-117 and Cys-123 are joined by a disulfide. Asn-254 carries an N-linked (GlcNAc...) asparagine glycan. Asp-303 is an active-site residue. Cys-338 and Cys-382 are oxidised to a cystine.

This sequence belongs to the peptidase A1 family.

It catalyses the reaction Hydrolysis of proteins, favoring hydrophobic residues at P1 and P1'. Clots milk. Does not accept Lys at P1, and hence does not activate trypsinogen.. Functionally, this enzyme, capable of clotting milk is frequently used for cheese production. This is Mucorpepsin from Rhizomucor pusillus.